Here is a 293-residue protein sequence, read N- to C-terminus: NAD-dependent protein deacetylase (293 aa).

The Deacetylase sirtuin-type domain occupies 1-284 (MTVAITQTGP…QPPDPLHTAT (284 aa)). Residues 27–47 (GAGC…GGWK) and 105–108 (QNVD) contribute to the NAD(+) site. His123 acts as the Proton acceptor in catalysis. Residues Cys131, Cys134, Cys182, and Cys185 each contribute to the Zn(2+) site. NAD(+) is bound by residues 222–224 (GSS), 248–250 (NFG), and Cys266.

Belongs to the sirtuin family. Class II subfamily. Zn(2+) serves as cofactor.

The protein localises to the cytoplasm. The catalysed reaction is N(6)-acetyl-L-lysyl-[protein] + NAD(+) + H2O = 2''-O-acetyl-ADP-D-ribose + nicotinamide + L-lysyl-[protein]. In terms of biological role, NAD-dependent protein deacetylase which modulates the activities of several enzymes which are inactive in their acetylated form. In Xanthomonas campestris pv. campestris (strain 8004), this protein is NAD-dependent protein deacetylase.